The sequence spans 818 residues: Glycerol-3-phosphate acyltransferase (818 aa).

The short motif at 305–310 (HRSHMD) is the HXXXXD motif element.

Belongs to the GPAT/DAPAT family.

Its subcellular location is the cell inner membrane. The catalysed reaction is sn-glycerol 3-phosphate + an acyl-CoA = a 1-acyl-sn-glycero-3-phosphate + CoA. It participates in phospholipid metabolism; CDP-diacylglycerol biosynthesis; CDP-diacylglycerol from sn-glycerol 3-phosphate: step 1/3. This Photorhabdus laumondii subsp. laumondii (strain DSM 15139 / CIP 105565 / TT01) (Photorhabdus luminescens subsp. laumondii) protein is Glycerol-3-phosphate acyltransferase.